The sequence spans 476 residues: Bifunctional protein HldE (476 aa).

Positions 1–318 (MAQYSAEFKQ…ENAIHARPET (318 aa)) are ribokinase. Residue 195-198 (NMSE) participates in ATP binding. Asp264 is an active-site residue. The cytidylyltransferase stretch occupies residues 344-476 (MTNGCFDILH…VIEKIKLLKD (133 aa)).

The protein in the N-terminal section; belongs to the carbohydrate kinase PfkB family. This sequence in the C-terminal section; belongs to the cytidylyltransferase family. As to quaternary structure, homodimer.

The catalysed reaction is D-glycero-beta-D-manno-heptose 7-phosphate + ATP = D-glycero-beta-D-manno-heptose 1,7-bisphosphate + ADP + H(+). It catalyses the reaction D-glycero-beta-D-manno-heptose 1-phosphate + ATP + H(+) = ADP-D-glycero-beta-D-manno-heptose + diphosphate. Its pathway is nucleotide-sugar biosynthesis; ADP-L-glycero-beta-D-manno-heptose biosynthesis; ADP-L-glycero-beta-D-manno-heptose from D-glycero-beta-D-manno-heptose 7-phosphate: step 1/4. It participates in nucleotide-sugar biosynthesis; ADP-L-glycero-beta-D-manno-heptose biosynthesis; ADP-L-glycero-beta-D-manno-heptose from D-glycero-beta-D-manno-heptose 7-phosphate: step 3/4. Functionally, catalyzes the phosphorylation of D-glycero-D-manno-heptose 7-phosphate at the C-1 position to selectively form D-glycero-beta-D-manno-heptose-1,7-bisphosphate. In terms of biological role, catalyzes the ADP transfer from ATP to D-glycero-beta-D-manno-heptose 1-phosphate, yielding ADP-D-glycero-beta-D-manno-heptose. This Haemophilus influenzae (strain PittGG) protein is Bifunctional protein HldE.